The following is a 201-amino-acid chain: Dephospho-CoA kinase (201 aa).

The 198-residue stretch at 4–201 (AFFVTASIAC…VIQEISKGKM (198 aa)) folds into the DPCK domain. 12-17 (ACGKST) lines the ATP pocket.

Belongs to the CoaE family.

Its subcellular location is the cytoplasm. It catalyses the reaction 3'-dephospho-CoA + ATP = ADP + CoA + H(+). Its pathway is cofactor biosynthesis; coenzyme A biosynthesis; CoA from (R)-pantothenate: step 5/5. Catalyzes the phosphorylation of the 3'-hydroxyl group of dephosphocoenzyme A to form coenzyme A. The protein is Dephospho-CoA kinase of Campylobacter jejuni (strain RM1221).